The sequence spans 445 residues: Probable fructoselysine/psicoselysine transporter FrlA (445 aa).

12 helical membrane passes run 10–30 (LGFW…GIFV), 38–58 (AAGT…IVIP), 93–113 (GWAS…LAIV), 121–141 (PIDP…FMLL), 155–175 (LITI…IFWF), 181–201 (AAPT…LAGI), 236–256 (CLLV…LMPF), 273–293 (IPAL…IVIL), 334–354 (IILQ…TSLL), 355–375 (GYFT…IIWC), 389–410 (AFGL…STFV), and 417–435 (LICA…AFWA).

It belongs to the amino acid-polyamine-organocation (APC) superfamily.

The protein resides in the cell inner membrane. It carries out the reaction N(6)-(D-fructosyl)-L-lysine(in) = N(6)-(D-fructosyl)-L-lysine(out). The enzyme catalyses N(6)-(D-psicosyl)-L-lysine(in) = N(6)-(D-psicosyl)-L-lysine(out). It participates in carbohydrate metabolism; fructoselysine degradation. In terms of biological role, is likely involved in the transport of fructoselysine and psicoselysine to the cytoplasm, where they are degraded. The polypeptide is Probable fructoselysine/psicoselysine transporter FrlA (Escherichia coli (strain K12)).